The following is a 693-amino-acid chain: MA3 DOMAIN-CONTAINING TRANSLATION REGULATORY FACTOR 2 (693 aa).

The tract at residues 25 to 60 (SLDPLPQANMAEDLTKSRRHSPIKVEGSEETWGVED) is disordered. The region spanning 90–211 (EYKKKATVIV…PPAFLKKQMK (122 aa)) is the MI 1 domain. The Nuclear localization signal 1 signature appears at 241-248 (EKRWGGTD). MI domains follow at residues 254–375 (DVKA…SLSA), 389–510 (VFKD…EVLN), and 560–681 (EVKE…EDSQ). Positions 430–437 (VKYLITLA) match the Nuclear localization signal 2 motif. Residues 673-693 (ESFASEDSQSKKQNGSSSSSG) are disordered. Over residues 683–693 (KKQNGSSSSSG) the composition is skewed to low complexity.

The protein belongs to the PDCD4 family. As to quaternary structure, binds to EIF4A1. The association with ribosomes is modulated by cellular energy status and TOR activity. As to expression, mostly expressed in reproductive tissues, such as flower buds and flowers, and, to a lower extent, in vegetative tissues, such as leaves, roots and stems.

The protein resides in the nucleus. It localises to the cytoplasm. The protein localises to the cytosol. Its function is as follows. Involved in target of rapamycin (TOR)-regulated translation control, especially under energy-deficient conditions. The chain is MA3 DOMAIN-CONTAINING TRANSLATION REGULATORY FACTOR 2 from Arabidopsis thaliana (Mouse-ear cress).